A 292-amino-acid chain; its full sequence is ATP synthase gamma chain (292 aa).

Belongs to the ATPase gamma chain family. In terms of assembly, F-type ATPases have 2 components, CF(1) - the catalytic core - and CF(0) - the membrane proton channel. CF(1) has five subunits: alpha(3), beta(3), gamma(1), delta(1), epsilon(1). CF(0) has three main subunits: a, b and c.

The protein resides in the cell inner membrane. In terms of biological role, produces ATP from ADP in the presence of a proton gradient across the membrane. The gamma chain is believed to be important in regulating ATPase activity and the flow of protons through the CF(0) complex. The protein is ATP synthase gamma chain of Methylobacterium nodulans (strain LMG 21967 / CNCM I-2342 / ORS 2060).